The chain runs to 195 residues: N-terminal acetyltransferase B complex catalytic subunit NAT3 (195 aa).

The 171-residue stretch at 2-172 folds into the N-acetyltransferase domain; the sequence is TTIQPFEPVD…DAFDMRKAMA (171 aa).

This sequence belongs to the acetyltransferase family. GNAT subfamily. Component of the N-terminal acetyltransferase B (NatB) complex, which is composed of NAT3 and MDM20.

It is found in the cytoplasm. The catalysed reaction is N-terminal L-methionyl-L-asparaginyl-[protein] + acetyl-CoA = N-terminal N(alpha)-acetyl-L-methionyl-L-asparaginyl-[protein] + CoA + H(+). It catalyses the reaction N-terminal L-methionyl-L-glutaminyl-[protein] + acetyl-CoA = N-terminal N(alpha)-acetyl-L-methionyl-L-glutaminyl-[protein] + CoA + H(+). It carries out the reaction N-terminal L-methionyl-L-aspartyl-[protein] + acetyl-CoA = N-terminal N(alpha)-acetyl-L-methionyl-L-aspartyl-[protein] + CoA + H(+). The enzyme catalyses N-terminal L-methionyl-L-glutamyl-[protein] + acetyl-CoA = N-terminal N(alpha)-acetyl-L-methionyl-L-glutamyl-[protein] + CoA + H(+). Catalytic subunit of the NatB N-terminal acetyltransferase, which catalyzes acetylation of the amino-terminal methionine residues of all proteins beginning with Met-Asp or Met-Glu and of some proteins beginning with Met-Asn, Met-Gln or Met-Met. NatB acetylates TPM1 protein and regulates tropomyocin-actin interactions, it is presumed to N-acetylate 15% of all yeast proteins. The chain is N-terminal acetyltransferase B complex catalytic subunit NAT3 from Saccharomyces cerevisiae (strain ATCC 204508 / S288c) (Baker's yeast).